We begin with the raw amino-acid sequence, 452 residues long: 3-phosphoshikimate 1-carboxyvinyltransferase (452 aa).

Residues Lys24, Ser25, and Arg29 each contribute to the 3-phosphoshikimate site. Lys24 contacts phosphoenolpyruvate. Phosphoenolpyruvate-binding residues include Gly95 and Arg123. 3-phosphoshikimate contacts are provided by Ser167, Gln169, Asp319, and Lys346. Gln169 contributes to the phosphoenolpyruvate binding site. The active-site Proton acceptor is Asp319. Phosphoenolpyruvate-binding residues include Arg350 and Arg394.

It belongs to the EPSP synthase family. As to quaternary structure, monomer.

Its subcellular location is the cytoplasm. It carries out the reaction 3-phosphoshikimate + phosphoenolpyruvate = 5-O-(1-carboxyvinyl)-3-phosphoshikimate + phosphate. It participates in metabolic intermediate biosynthesis; chorismate biosynthesis; chorismate from D-erythrose 4-phosphate and phosphoenolpyruvate: step 6/7. Catalyzes the transfer of the enolpyruvyl moiety of phosphoenolpyruvate (PEP) to the 5-hydroxyl of shikimate-3-phosphate (S3P) to produce enolpyruvyl shikimate-3-phosphate and inorganic phosphate. In Phenylobacterium zucineum (strain HLK1), this protein is 3-phosphoshikimate 1-carboxyvinyltransferase.